The sequence spans 63 residues: Prokaryotic ubiquitin-like protein Pup (63 aa).

A disordered region spans residues 1 to 35 (MSGQQSQINAGGGNGQGGDTPEFDAGQVSINSAGT). An ARC ATPase binding region spans residues 19–57 (DTPEFDAGQVSINSAGTDDLLDEIDGLLESNAEEFVRSY). Residue Glu63 forms an Isoglutamyl lysine isopeptide (Glu-Lys) (interchain with K-? in acceptor proteins) linkage.

Belongs to the prokaryotic ubiquitin-like protein family. In terms of assembly, strongly interacts with the proteasome-associated ATPase ARC through a hydrophobic interface; the interacting region of Pup lies in its C-terminal half. There is one Pup binding site per ARC hexamer ring.

It functions in the pathway protein degradation; proteasomal Pup-dependent pathway. Its function is as follows. Protein modifier that is covalently attached to lysine residues of substrate proteins, thereby targeting them for proteasomal degradation. The tagging system is termed pupylation. In Corynebacterium aurimucosum (strain ATCC 700975 / DSM 44827 / CIP 107346 / CN-1) (Corynebacterium nigricans), this protein is Prokaryotic ubiquitin-like protein Pup.